We begin with the raw amino-acid sequence, 729 residues long: Catalase-peroxidase (729 aa).

The tryptophyl-tyrosyl-methioninium (Trp-Tyr) (with M-244) cross-link spans 95–218 (WHSAGTYRGA…LAAVEMGLVY (124 aa)). Catalysis depends on His-96, which acts as the Proton acceptor. Positions 218-244 (YVNPEGPHGHPDPVASGPDVRDTFARM) form a cross-link, tryptophyl-tyrosyl-methioninium (Tyr-Met) (with W-95). His-259 provides a ligand contact to heme b.

Belongs to the peroxidase family. Peroxidase/catalase subfamily. In terms of assembly, homodimer or homotetramer. Heme b is required as a cofactor. Formation of the three residue Trp-Tyr-Met cross-link is important for the catalase, but not the peroxidase activity of the enzyme.

It catalyses the reaction H2O2 + AH2 = A + 2 H2O. It carries out the reaction 2 H2O2 = O2 + 2 H2O. Bifunctional enzyme with both catalase and broad-spectrum peroxidase activity. The polypeptide is Catalase-peroxidase (Synechococcus sp. (strain CC9605)).